Reading from the N-terminus, the 179-residue chain is Large ribosomal subunit protein uL6 (179 aa).

This sequence belongs to the universal ribosomal protein uL6 family. As to quaternary structure, part of the 50S ribosomal subunit.

Its function is as follows. This protein binds to the 23S rRNA, and is important in its secondary structure. It is located near the subunit interface in the base of the L7/L12 stalk, and near the tRNA binding site of the peptidyltransferase center. This is Large ribosomal subunit protein uL6 from Streptomyces griseus subsp. griseus (strain JCM 4626 / CBS 651.72 / NBRC 13350 / KCC S-0626 / ISP 5235).